The sequence spans 365 residues: Alanine racemase (365 aa).

The Proton acceptor; specific for D-alanine role is filled by K32. At K32 the chain carries N6-(pyridoxal phosphate)lysine. A substrate-binding site is contributed by R128. Y257 (proton acceptor; specific for L-alanine) is an active-site residue. M305 lines the substrate pocket.

Belongs to the alanine racemase family. It depends on pyridoxal 5'-phosphate as a cofactor.

The catalysed reaction is L-alanine = D-alanine. It participates in amino-acid biosynthesis; D-alanine biosynthesis; D-alanine from L-alanine: step 1/1. Catalyzes the interconversion of L-alanine and D-alanine. May also act on other amino acids. This Francisella tularensis subsp. tularensis (strain WY96-3418) protein is Alanine racemase (alr).